The following is a 719-amino-acid chain: DNA ligase (719 aa).

Residues 42-46 (DAAYD), 92-93 (SL), and Glu-126 each bind NAD(+). The active-site N6-AMP-lysine intermediate is Lys-128. Residues Arg-149, Glu-185, Lys-301, and Lys-325 each contribute to the NAD(+) site. Residues Cys-430, Cys-433, Cys-448, and Cys-454 each coordinate Zn(2+). Positions 640–719 (ATGSPVEGKT…DDWFKLVGED (80 aa)) constitute a BRCT domain.

It belongs to the NAD-dependent DNA ligase family. LigA subfamily. Mg(2+) is required as a cofactor. The cofactor is Mn(2+).

The enzyme catalyses NAD(+) + (deoxyribonucleotide)n-3'-hydroxyl + 5'-phospho-(deoxyribonucleotide)m = (deoxyribonucleotide)n+m + AMP + beta-nicotinamide D-nucleotide.. Its function is as follows. DNA ligase that catalyzes the formation of phosphodiester linkages between 5'-phosphoryl and 3'-hydroxyl groups in double-stranded DNA using NAD as a coenzyme and as the energy source for the reaction. It is essential for DNA replication and repair of damaged DNA. In Brucella melitensis biotype 2 (strain ATCC 23457), this protein is DNA ligase.